Here is a 545-residue protein sequence, read N- to C-terminus: Membrane protein insertase YidC (545 aa).

The chain crosses the membrane as a helical span at residues 6–26; it reads LILFSALVLVLFLMWDAWQTD. A disordered region spans residues 34–59; that stretch reads PPPPQPTASSGESSPVLPEAVPDAPP. The next 3 helical transmembrane spans lie at 357 to 377, 428 to 448, and 505 to 525; these read LVGN…LVFF, GGCL…WMLL, and PVMF…YWVV.

Belongs to the OXA1/ALB3/YidC family. Type 1 subfamily. In terms of assembly, interacts with the Sec translocase complex via SecD. Specifically interacts with transmembrane segments of nascent integral membrane proteins during membrane integration.

It localises to the cell inner membrane. Required for the insertion and/or proper folding and/or complex formation of integral membrane proteins into the membrane. Involved in integration of membrane proteins that insert both dependently and independently of the Sec translocase complex, as well as at least some lipoproteins. Aids folding of multispanning membrane proteins. This chain is Membrane protein insertase YidC, found in Nitrosococcus oceani (strain ATCC 19707 / BCRC 17464 / JCM 30415 / NCIMB 11848 / C-107).